A 388-amino-acid chain; its full sequence is Probable proton-coupled zinc antiporter SLC30A3 (388 aa).

The disordered stretch occupies residues 1–42 (MEPSPASGGSETTRLVSPRDRSSAGGGLRLKSLFTEPSEPLP). The Cytoplasmic portion of the chain corresponds to 1-75 (MEPSPASGGS…SPERAQARRQ (75 aa)). Phosphoserine occurs at positions 63 and 66. A helical transmembrane segment spans residues 76–96 (LYAACVVCFIFMAGEVVGGYL). Residues 97–105 (AHSLAIMTD) lie on the Lumenal side of the membrane. A helical membrane pass occupies residues 106 to 126 (AAHLLADIGSMMASLFSLWLS). Zn(2+) contacts are provided by His108 and Asp112. Topologically, residues 127-145 (TRPATRTMTFGWHRSETLG) are cytoplasmic. Residues 146-166 (ALASVVSLWIVTGILLYLAFL) form a helical membrane-spanning segment. Residues 167–177 (RLLHSDYHIEA) lie on the Lumenal side of the membrane. Residues 178 to 198 (GAMLLTASIAVCANMIMAFVL) traverse the membrane as a helical segment. At 199-235 (HQTGAPHSHGPRGAEYAPLEEGHGHPLSLGNTSVRAA) the chain is on the cytoplasmic side. A helical membrane pass occupies residues 236-256 (FVHVLGDLLQSLGVLAASILI). Residues His238 and Asp242 each contribute to the Zn(2+) site. Topologically, residues 257 to 263 (YFKPQYK) are lumenal. Residues 264-284 (VADPISTFLFSICALGSTAPT) traverse the membrane as a helical segment. The Cytoplasmic segment spans residues 285 to 388 (LRDVLLVLME…CLRCREPPKA (104 aa)).

It belongs to the cation diffusion facilitator (CDF) transporter (TC 2.A.4) family. SLC30A subfamily. In terms of assembly, homodimer. Homodimerization could regulate efficiency of zinc transport. Interacts with TMEM163.

It is found in the cytoplasmic vesicle. The protein localises to the secretory vesicle. The protein resides in the synaptic vesicle membrane. It localises to the synapse. Its subcellular location is the synaptosome. It is found in the late endosome membrane. The protein localises to the lysosome membrane. The enzyme catalyses Zn(2+)(in) + 2 H(+)(out) = Zn(2+)(out) + 2 H(+)(in). Functionally, probable proton-coupled zinc ion antiporter mediating the import of zinc from cytoplasm into synaptic vesicles and participating to cellular zinc ion homeostasis in the brain. The chain is Probable proton-coupled zinc antiporter SLC30A3 from Rattus norvegicus (Rat).